Consider the following 338-residue polypeptide: Lipoate-protein ligase A (338 aa).

The 188-residue stretch at 29-216 (PATQRVLFLW…AFFAHYGERV (188 aa)) folds into the BPL/LPL catalytic domain. ATP contacts are provided by residues arginine 71, 76–79 (GAVF), and lysine 134. Lysine 134 is a binding site for (R)-lipoate.

The protein belongs to the LplA family. In terms of assembly, monomer.

The protein localises to the cytoplasm. It catalyses the reaction L-lysyl-[lipoyl-carrier protein] + (R)-lipoate + ATP = N(6)-[(R)-lipoyl]-L-lysyl-[lipoyl-carrier protein] + AMP + diphosphate + H(+). Its pathway is protein modification; protein lipoylation via exogenous pathway; protein N(6)-(lipoyl)lysine from lipoate: step 1/2. It functions in the pathway protein modification; protein lipoylation via exogenous pathway; protein N(6)-(lipoyl)lysine from lipoate: step 2/2. Its function is as follows. Catalyzes both the ATP-dependent activation of exogenously supplied lipoate to lipoyl-AMP and the transfer of the activated lipoyl onto the lipoyl domains of lipoate-dependent enzymes. In Salmonella agona (strain SL483), this protein is Lipoate-protein ligase A.